The chain runs to 61 residues: Small ribosomal subunit protein uS14 (61 aa).

Cys-24, Cys-27, Cys-40, and Cys-43 together coordinate Zn(2+).

It belongs to the universal ribosomal protein uS14 family. Zinc-binding uS14 subfamily. In terms of assembly, part of the 30S ribosomal subunit. Contacts proteins S3 and S10. Zn(2+) is required as a cofactor.

Binds 16S rRNA, required for the assembly of 30S particles and may also be responsible for determining the conformation of the 16S rRNA at the A site. This is Small ribosomal subunit protein uS14 from Mycoplasma mobile (strain ATCC 43663 / 163K / NCTC 11711) (Mesomycoplasma mobile).